We begin with the raw amino-acid sequence, 591 residues long: Eukaryotic translation initiation factor 3 subunit D (591 aa).

The disordered stretch occupies residues 100–159; that stretch reads SGGNPDEDAAFRLVDGKPPPRPKFGPKWRFNPHHNRNQLPQRRDEEVEAKKRDAEKERAR. The segment covering 123 to 135 has biased composition (basic residues); sequence FGPKWRFNPHHNR. Residues 140–159 show a composition bias toward basic and acidic residues; that stretch reads QRRDEEVEAKKRDAEKERAR. Positions 309 to 323 are RNA gate; it reads QLDLLSVHETSQEPL. The span at 549–560 shows a compositional bias: acidic residues; sequence DYVEEPLPEDEQ. The interval 549 to 591 is disordered; the sequence is DYVEEPLPEDEQVQPTEENTEGAEASVAATKETEEKKADDAQA. Residues 579 to 591 show a composition bias toward basic and acidic residues; sequence KETEEKKADDAQA.

This sequence belongs to the eIF-3 subunit D family. As to quaternary structure, component of the eukaryotic translation initiation factor 3 (eIF-3) complex, which is composed of at least 13 different subunits.

Its subcellular location is the cytoplasm. Functionally, mRNA cap-binding component of the eukaryotic translation initiation factor 3 (eIF-3) complex, which is involved in protein synthesis of a specialized repertoire of mRNAs and, together with other initiation factors, stimulates binding of mRNA and methionyl-tRNAi to the 40S ribosome. The eIF-3 complex specifically targets and initiates translation of a subset of mRNAs involved in cell proliferation. In the eIF-3 complex, eif3d specifically recognizes and binds the 7-methylguanosine cap of a subset of mRNAs. The sequence is that of Eukaryotic translation initiation factor 3 subunit D (TIF3D1) from Arabidopsis thaliana (Mouse-ear cress).